A 445-amino-acid chain; its full sequence is Exodeoxyribonuclease 7 large subunit (445 aa).

The protein belongs to the XseA family. In terms of assembly, heterooligomer composed of large and small subunits.

Its subcellular location is the cytoplasm. The catalysed reaction is Exonucleolytic cleavage in either 5'- to 3'- or 3'- to 5'-direction to yield nucleoside 5'-phosphates.. In terms of biological role, bidirectionally degrades single-stranded DNA into large acid-insoluble oligonucleotides, which are then degraded further into small acid-soluble oligonucleotides. This Staphylococcus saprophyticus subsp. saprophyticus (strain ATCC 15305 / DSM 20229 / NCIMB 8711 / NCTC 7292 / S-41) protein is Exodeoxyribonuclease 7 large subunit.